A 73-amino-acid chain; its full sequence is Translation initiation factor IF-1 (73 aa).

The region spanning M1–R73 is the S1-like domain.

It belongs to the IF-1 family. As to quaternary structure, component of the 30S ribosomal translation pre-initiation complex which assembles on the 30S ribosome in the order IF-2 and IF-3, IF-1 and N-formylmethionyl-tRNA(fMet); mRNA recruitment can occur at any time during PIC assembly.

The protein resides in the cytoplasm. Functionally, one of the essential components for the initiation of protein synthesis. Stabilizes the binding of IF-2 and IF-3 on the 30S subunit to which N-formylmethionyl-tRNA(fMet) subsequently binds. Helps modulate mRNA selection, yielding the 30S pre-initiation complex (PIC). Upon addition of the 50S ribosomal subunit IF-1, IF-2 and IF-3 are released leaving the mature 70S translation initiation complex. The polypeptide is Translation initiation factor IF-1 (Acinetobacter baumannii (strain ATCC 17978 / DSM 105126 / CIP 53.77 / LMG 1025 / NCDC KC755 / 5377)).